Consider the following 97-residue polypeptide: Peptide YY (97 aa).

A signal peptide spans 1 to 28 (MVFVRRPWPALTTVLLALLVCLGALVDA). S41 carries the post-translational modification Phosphoserine. At Y64 the chain carries Tyrosine amide. Positions 65–97 (GKRDGPDTLLSKTFFPDGEDRPVRSRSEGPDLW) are disordered. A propeptide spanning residues 68–97 (DGPDTLLSKTFFPDGEDRPVRSRSEGPDLW) is cleaved from the precursor. The span at 82–97 (GEDRPVRSRSEGPDLW) shows a compositional bias: basic and acidic residues.

This sequence belongs to the NPY family. Post-translationally, the peptide YY form is cleaved at Pro-30 by the prolyl endopeptidase FAP (seprase) activity (in vitro) to generate peptide YY(3-36).

It localises to the secreted. Functionally, this gut peptide inhibits exocrine pancreatic secretion, has a vasoconstrictory action and inhibitis jejunal and colonic mobility. The protein is Peptide YY (PYY) of Homo sapiens (Human).